The chain runs to 463 residues: Exodeoxyribonuclease 7 large subunit (463 aa).

This sequence belongs to the XseA family. In terms of assembly, heterooligomer composed of large and small subunits.

Its subcellular location is the cytoplasm. It catalyses the reaction Exonucleolytic cleavage in either 5'- to 3'- or 3'- to 5'-direction to yield nucleoside 5'-phosphates.. In terms of biological role, bidirectionally degrades single-stranded DNA into large acid-insoluble oligonucleotides, which are then degraded further into small acid-soluble oligonucleotides. This is Exodeoxyribonuclease 7 large subunit from Klebsiella pneumoniae subsp. pneumoniae (strain ATCC 700721 / MGH 78578).